The primary structure comprises 6359 residues: Bacitracin synthase 3 (6359 aa).

Positions 461–1034 are domain 1 (isoleucine-activating); sequence LHELFEEQAM…IKGLGEYIRS (574 aa). A compositionally biased stretch (basic and acidic residues) spans 941–953; the sequence is VDRKALPEPDRTA. Residues 941 to 962 are disordered; the sequence is VDRKALPEPDRTAGAENEYEAP. 5 consecutive Carrier domains span residues 961–1036, 1993–2067, 3497–3572, 4539–4613, and 6047–6122; these read APRN…RSTK, APRN…KKQS, APRN…ESMK, PPRN…KAES, and PPRH…KHAQ. Serine 996, serine 2028, and serine 3532 each carry O-(pantetheine 4'-phosphoryl)serine. Residues 1517-2064 are domain 2 (D-phenylalanine-activating); sequence FEDQTLTYRQ…RIKDLAKYVK (548 aa). Residues 2999–3570 are domain 3 (histidine-activating); that stretch reads NKTIHQLFEE…IKDIGDFIES (572 aa). The tract at residues 4047–4612 is domain 4 (D-aspartic acid-activating); it reads EQTAVVYADE…KSLSRYVKAE (566 aa). The tract at residues 4521 to 4544 is disordered; that stretch reads IDTAALPEPQPGKETEYEPPRNET. Positions 4531-4544 are enriched in basic and acidic residues; the sequence is PGKETEYEPPRNET. O-(pantetheine 4'-phosphoryl)serine occurs at positions 4574 and 6082. Residues 5549-6129 are domain 5 (asparagine-activating); that stretch reads IHRLFEEQAE…HAQDLLKDYT (581 aa).

The protein belongs to the ATP-dependent AMP-binding enzyme family. Large multienzyme complex of BA1, BA2 and BA3. The cofactor is pantetheine 4'-phosphate.

It carries out the reaction L-aspartate = D-aspartate. The enzyme catalyses L-phenylalanine + ATP + H2O = D-phenylalanine + AMP + diphosphate + H(+). Its pathway is antibiotic biosynthesis; bacitracin biosynthesis. Its function is as follows. Induces peptide synthesis, activates and incorporates five amino acids, forms a thiazoline ring between the first two amino acids and incorporates a D-glutamine in the fourth position. The sequence is that of Bacitracin synthase 3 (bacC) from Bacillus licheniformis.